The sequence spans 81 residues: ATP synthase subunit c (81 aa).

2 helical membrane-spanning segments follow: residues 4 to 24 (MIAQ…AIGA) and 57 to 77 (VGLV…FVFA).

Belongs to the ATPase C chain family. F-type ATPases have 2 components, F(1) - the catalytic core - and F(0) - the membrane proton channel. F(1) has five subunits: alpha(3), beta(3), gamma(1), delta(1), epsilon(1). F(0) has three main subunits: a(1), b(2) and c(10-14). The alpha and beta chains form an alternating ring which encloses part of the gamma chain. F(1) is attached to F(0) by a central stalk formed by the gamma and epsilon chains, while a peripheral stalk is formed by the delta and b chains.

The protein localises to the cell membrane. Its function is as follows. F(1)F(0) ATP synthase produces ATP from ADP in the presence of a proton or sodium gradient. F-type ATPases consist of two structural domains, F(1) containing the extramembraneous catalytic core and F(0) containing the membrane proton channel, linked together by a central stalk and a peripheral stalk. During catalysis, ATP synthesis in the catalytic domain of F(1) is coupled via a rotary mechanism of the central stalk subunits to proton translocation. Functionally, key component of the F(0) channel; it plays a direct role in translocation across the membrane. A homomeric c-ring of between 10-14 subunits forms the central stalk rotor element with the F(1) delta and epsilon subunits. The polypeptide is ATP synthase subunit c (Mycobacterium leprae (strain TN)).